Here is a 264-residue protein sequence, read N- to C-terminus: MHPPTDLPRWVYLPAIAGIVFVAMPLVAIAIRVDWPRFWALITTPSSQTALLLSVKTAAASTVLCVLLGVPMALVLARSRGRLVRSLRPLILLPLVLPPVVGGIALLYAFGRLGLIGRYLEAAGISIAFSTAAVVLAQTFVSLPYLVISLEGAARTAGADYEVVAATLGARPGTVWWRVTLPLLLPGVVSGSVLAFARSLGEFGATLTFAGSRQGVTRTLPLEIYLQRVTDPDAAVALSLLLVVVAALVVLGVGARTPIGTDTR.

6 helical membrane-spanning segments follow: residues 11 to 31 (VYLPAIAGIVFVAMPLVAIAI), 57 to 77 (TAAASTVLCVLLGVPMALVLA), 90 to 110 (LILLPLVLPPVVGGIALLYAF), 127 to 147 (IAFSTAAVVLAQTFVSLPYLV), 176 to 196 (WWRVTLPLLLPGVVSGSVLAF), and 234 to 254 (AAVALSLLLVVVAALVVLGVG). The 203-residue stretch at 51 to 253 (LLLSVKTAAA…VVAALVVLGV (203 aa)) folds into the ABC transmembrane type-1 domain.

This sequence belongs to the binding-protein-dependent transport system permease family. CysTW subfamily.

Its subcellular location is the cell membrane. Part of the binding-protein-dependent transport system ModABCD for molybdenum; probably responsible for the translocation of the substrate across the membrane. This chain is Molybdenum transport system permease protein ModB (modB), found in Mycobacterium bovis (strain ATCC BAA-935 / AF2122/97).